The chain runs to 42 residues: Gastric inhibitory polypeptide (42 aa).

This sequence belongs to the glucagon family.

It localises to the secreted. Functionally, potent stimulator of insulin secretion and relatively poor inhibitor of gastric acid secretion. This is Gastric inhibitory polypeptide (GIP) from Sus scrofa (Pig).